A 707-amino-acid polypeptide reads, in one-letter code: Molybdenum cofactor sulfurase (707 aa).

The residue at position 206 (Lys-206) is an N6-(pyridoxal phosphate)lysine. Residue Cys-365 is part of the active site. Residues Gln-558 to Phe-705 form the MOSC domain.

This sequence belongs to the class-V pyridoxal-phosphate-dependent aminotransferase family. MOCOS subfamily. Requires pyridoxal 5'-phosphate as cofactor.

It catalyses the reaction Mo-molybdopterin + L-cysteine + AH2 = thio-Mo-molybdopterin + L-alanine + A + H2O. The protein operates within cofactor biosynthesis; molybdopterin biosynthesis. Functionally, sulfurates the molybdenum cofactor. Sulfation of molybdenum is essential for xanthine dehydrogenase (XDH) and aldehyde oxidase (ADO) enzymes in which molybdenum cofactor is liganded by 1 oxygen and 1 sulfur atom in active form. This Caenorhabditis briggsae protein is Molybdenum cofactor sulfurase (mocs-1).